A 161-amino-acid polypeptide reads, in one-letter code: Phosphopantetheine adenylyltransferase (161 aa).

T9 serves as a coordination point for substrate. ATP contacts are provided by residues 9–10 (TF) and H17. Substrate contacts are provided by K41, L73, and R87. ATP is bound by residues 88–90 (GLR), E98, and 123–129 (YQFISGT).

The protein belongs to the bacterial CoaD family. Homohexamer. Mg(2+) is required as a cofactor.

The protein resides in the cytoplasm. The enzyme catalyses (R)-4'-phosphopantetheine + ATP + H(+) = 3'-dephospho-CoA + diphosphate. It functions in the pathway cofactor biosynthesis; coenzyme A biosynthesis; CoA from (R)-pantothenate: step 4/5. Functionally, reversibly transfers an adenylyl group from ATP to 4'-phosphopantetheine, yielding dephospho-CoA (dPCoA) and pyrophosphate. This is Phosphopantetheine adenylyltransferase from Cupriavidus metallidurans (strain ATCC 43123 / DSM 2839 / NBRC 102507 / CH34) (Ralstonia metallidurans).